We begin with the raw amino-acid sequence, 123 residues long: Ribonuclease P protein component (123 aa).

This sequence belongs to the RnpA family. Consists of a catalytic RNA component (M1 or rnpB) and a protein subunit.

It carries out the reaction Endonucleolytic cleavage of RNA, removing 5'-extranucleotides from tRNA precursor.. In terms of biological role, RNaseP catalyzes the removal of the 5'-leader sequence from pre-tRNA to produce the mature 5'-terminus. It can also cleave other RNA substrates such as 4.5S RNA. The protein component plays an auxiliary but essential role in vivo by binding to the 5'-leader sequence and broadening the substrate specificity of the ribozyme. In Herpetosiphon aurantiacus (strain ATCC 23779 / DSM 785 / 114-95), this protein is Ribonuclease P protein component.